The chain runs to 834 residues: Ras GTPase-activating protein 3 (834 aa).

2 consecutive C2 domains span residues 1-112 (MAVE…DTWF) and 123-263 (VQGK…EAWY). Ala-2 carries the post-translational modification N-acetylalanine. At Tyr-66 the chain carries Phosphotyrosine. Phosphoserine is present on Ser-77. Thr-110 carries the phosphothreonine modification. The region spanning 346–561 (GRVVPFISAI…DAVKNFLDLI (216 aa)) is the Ras-GAP domain. A PH domain is found at 576–677 (ILLKEGFMIK…WIDILTKVSQ (102 aa)). The Btk-type zinc-finger motif lies at 679-715 (NQKRLAVYHPSAYLNGHWLCCRASSDTAAGCSPCTGG). His-687, Cys-698, Cys-699, and Cys-709 together coordinate Zn(2+). Positions 806-834 (KYGSQEHPIGDKSFQSYIRQQSETPAHSM) are disordered. Phosphoserine occurs at positions 809 and 833. Residues 818-834 (SFQSYIRQQSETPAHSM) are compositionally biased toward polar residues.

Its function is as follows. Inhibitory regulator of the Ras-cyclic AMP pathway. May bind inositol tetrakisphosphate (IP4). The sequence is that of Ras GTPase-activating protein 3 (RASA3) from Bos taurus (Bovine).